The following is a 29-amino-acid chain: Cytochrome b6-f complex subunit 8 (29 aa).

Residues 3–23 form a helical membrane-spanning segment; it reads IISLAWAALMVVFTFSLSLVV.

The protein belongs to the PetN family. The 4 large subunits of the cytochrome b6-f complex are cytochrome b6, subunit IV (17 kDa polypeptide, PetD), cytochrome f and the Rieske protein, while the 4 small subunits are PetG, PetL, PetM and PetN. The complex functions as a dimer.

The protein localises to the plastid. It is found in the chloroplast thylakoid membrane. Functionally, component of the cytochrome b6-f complex, which mediates electron transfer between photosystem II (PSII) and photosystem I (PSI), cyclic electron flow around PSI, and state transitions. This is Cytochrome b6-f complex subunit 8 from Nicotiana tomentosiformis (Tobacco).